Here is a 166-residue protein sequence, read N- to C-terminus: Thioredoxin, mitochondrial (166 aa).

The N-terminal 59 residues, 1-59 (MAQRLLLGRFLTSVISRKPPQGVWASLTSKTLQTPQYNAGGLTVMPSPARTVHTTRVCL), are a transit peptide targeting the mitochondrion. The Thioredoxin domain maps to 61-166 (TFNVQDGPDF…LEAFLKKLIG (106 aa)). Active-site nucleophile residues include Cys-90 and Cys-93. A disulfide bond links Cys-90 and Cys-93. Position 152 is an N6-acetyllysine; alternate (Lys-152). Residue Lys-152 is modified to N6-succinyllysine; alternate.

Belongs to the thioredoxin family. Monomer.

The protein resides in the mitochondrion. Important for the control of mitochondrial reactive oxygen species homeostasis, apoptosis regulation and cell viability. Is involved in various redox reactions including the reduction of protein disulfide bonds, through the reversible oxidation of its active center dithiol to a disulfide. The sequence is that of Thioredoxin, mitochondrial (Txn2) from Mus musculus (Mouse).